The following is a 305-amino-acid chain: Glycine--tRNA ligase alpha subunit (305 aa).

The protein belongs to the class-II aminoacyl-tRNA synthetase family. Tetramer of two alpha and two beta subunits.

The protein resides in the cytoplasm. The catalysed reaction is tRNA(Gly) + glycine + ATP = glycyl-tRNA(Gly) + AMP + diphosphate. The chain is Glycine--tRNA ligase alpha subunit from Streptococcus pneumoniae (strain Hungary19A-6).